A 463-amino-acid polypeptide reads, in one-letter code: Asparagine--tRNA ligase (463 aa).

The protein belongs to the class-II aminoacyl-tRNA synthetase family. In terms of assembly, homodimer.

The protein resides in the cytoplasm. The enzyme catalyses tRNA(Asn) + L-asparagine + ATP = L-asparaginyl-tRNA(Asn) + AMP + diphosphate + H(+). This Alkaliphilus oremlandii (strain OhILAs) (Clostridium oremlandii (strain OhILAs)) protein is Asparagine--tRNA ligase.